The following is a 432-amino-acid chain: Adenylosuccinate synthetase (432 aa).

GTP is bound by residues 13 to 19 (GDEGKGK) and 41 to 43 (GHT). The Proton acceptor role is filled by Asp-14. Mg(2+)-binding residues include Asp-14 and Gly-41. Residues 14 to 17 (DEGK), 39 to 42 (NAGH), Thr-130, Arg-144, Gln-225, Thr-240, and Arg-304 contribute to the IMP site. Catalysis depends on His-42, which acts as the Proton donor. 300–306 (AVTGRPR) lines the substrate pocket. GTP contacts are provided by residues Arg-306, 332-334 (KLD), and 415-417 (STG).

The protein belongs to the adenylosuccinate synthetase family. In terms of assembly, homodimer. The cofactor is Mg(2+).

It localises to the cytoplasm. It catalyses the reaction IMP + L-aspartate + GTP = N(6)-(1,2-dicarboxyethyl)-AMP + GDP + phosphate + 2 H(+). Its pathway is purine metabolism; AMP biosynthesis via de novo pathway; AMP from IMP: step 1/2. Plays an important role in the de novo pathway of purine nucleotide biosynthesis. Catalyzes the first committed step in the biosynthesis of AMP from IMP. The sequence is that of Adenylosuccinate synthetase from Actinobacillus pleuropneumoniae serotype 5b (strain L20).